Reading from the N-terminus, the 180-residue chain is Hypoxanthine-guanine phosphoribosyltransferase (180 aa).

Diphosphate contacts are provided by Lys-43 and Gly-44. Glu-99 and Asp-100 together coordinate Mg(2+). Catalysis depends on Asp-103, which acts as the Proton acceptor. Residues Lys-131, 152–153 (FI), and Asp-159 each bind GMP. Arg-165 is a diphosphate binding site.

Belongs to the purine/pyrimidine phosphoribosyltransferase family. Mg(2+) is required as a cofactor.

The protein resides in the cytoplasm. The enzyme catalyses IMP + diphosphate = hypoxanthine + 5-phospho-alpha-D-ribose 1-diphosphate. The catalysed reaction is GMP + diphosphate = guanine + 5-phospho-alpha-D-ribose 1-diphosphate. Its pathway is purine metabolism; IMP biosynthesis via salvage pathway; IMP from hypoxanthine: step 1/1. The protein operates within purine metabolism; GMP biosynthesis via salvage pathway; GMP from guanine: step 1/1. Purine salvage pathway enzyme that catalyzes the transfer of the ribosyl-5-phosphate group from 5-phospho-alpha-D-ribose 1-diphosphate (PRPP) to the N9 position of the 6-oxopurines hypoxanthine and guanine to form the corresponding ribonucleotides IMP (inosine 5'-monophosphate) and GMP (guanosine 5'-monophosphate), with the release of PPi. This chain is Hypoxanthine-guanine phosphoribosyltransferase (hpt), found in Streptococcus pyogenes serotype M3 (strain ATCC BAA-595 / MGAS315).